The following is a 76-amino-acid chain: Small ribosomal subunit protein uS17 (76 aa).

The protein belongs to the universal ribosomal protein uS17 family. As to quaternary structure, part of the 30S ribosomal subunit.

Its function is as follows. One of the primary rRNA binding proteins, it binds specifically to the 5'-end of 16S ribosomal RNA. The chain is Small ribosomal subunit protein uS17 from Dinoroseobacter shibae (strain DSM 16493 / NCIMB 14021 / DFL 12).